We begin with the raw amino-acid sequence, 340 residues long: Extracellular matrix protein-binding protein emp (340 aa).

The signal sequence occupies residues 1 to 26 (MKKKLLVLTMSTLFATQIMNSNHAKA).

Its subcellular location is the cell surface. In terms of biological role, adhesin that binds to the host cell extracellular matrix proteins fibronectin, fibrinogen, collagen, and vitronectin. The polypeptide is Extracellular matrix protein-binding protein emp (emp) (Staphylococcus aureus (strain MSSA476)).